The chain runs to 199 residues: ATP-dependent Clp protease proteolytic subunit (199 aa).

S97 acts as the Nucleophile in catalysis. The active site involves H122.

It belongs to the peptidase S14 family. Fourteen ClpP subunits assemble into 2 heptameric rings which stack back to back to give a disk-like structure with a central cavity, resembling the structure of eukaryotic proteasomes.

The protein resides in the cytoplasm. It carries out the reaction Hydrolysis of proteins to small peptides in the presence of ATP and magnesium. alpha-casein is the usual test substrate. In the absence of ATP, only oligopeptides shorter than five residues are hydrolyzed (such as succinyl-Leu-Tyr-|-NHMec, and Leu-Tyr-Leu-|-Tyr-Trp, in which cleavage of the -Tyr-|-Leu- and -Tyr-|-Trp bonds also occurs).. Its function is as follows. Cleaves peptides in various proteins in a process that requires ATP hydrolysis. Has a chymotrypsin-like activity. Plays a major role in the degradation of misfolded proteins. This is ATP-dependent Clp protease proteolytic subunit from Geobacter metallireducens (strain ATCC 53774 / DSM 7210 / GS-15).